A 563-amino-acid polypeptide reads, in one-letter code: Eukaryotic translation initiation factor 3 subunit D-1 (563 aa).

The segment at 98-167 is disordered; it reads VQKPPHQRGR…GPPPKMRESS (70 aa). A compositionally biased stretch (basic residues) spans 100–121; the sequence is KPPHQRGRFRNMRNSRSGRGRN. Thr128 is subject to Phosphothreonine. The tract at residues 291–305 is RNA gate; sequence EFDLLTVNETSVEPP.

It belongs to the eIF-3 subunit D family. Component of the eukaryotic translation initiation factor 3 (eIF-3) complex. The eIF-3 complex interacts with pix.

Its subcellular location is the cytoplasm. In terms of biological role, mRNA cap-binding component of the eukaryotic translation initiation factor 3 (eIF-3) complex, which is involved in protein synthesis of a specialized repertoire of mRNAs and, together with other initiation factors, stimulates binding of mRNA and methionyl-tRNAi to the 40S ribosome. The eIF-3 complex specifically targets and initiates translation of a subset of mRNAs involved in cell proliferation. In the eIF-3 complex, eif3d specifically recognizes and binds the 7-methylguanosine cap of a subset of mRNAs. The sequence is that of Eukaryotic translation initiation factor 3 subunit D-1 from Drosophila virilis (Fruit fly).